A 266-amino-acid polypeptide reads, in one-letter code: Gasdermin bGSDM (266 aa).

4 consecutive transmembrane segments (beta stranded) span residues 65–81 (FSGQ…GADL), 93–113 (EDKL…FAYE), 162–181 (QFTV…EAAV), and 187–203 (AHAS…SLQT). The C-terminal region stretch occupies residues 248-266 (GEEDFSVQPLQAPSGLLKL).

Belongs to the bacterial gasdermin family. In terms of assembly, monomer. As to quaternary structure, forms large, homooligomeric ring-shaped pores when inserted in membranes.

Its subcellular location is the cytoplasm. It is found in the cell membrane. Its activity is regulated as follows. The full-length protein before cleavage is inactive: intramolecular interactions between the N-terminal domain and the C-terminal region mediate autoinhibition. The pyroptosis-like-inducing activity is carried by the released N-terminal domain (Gasdermin bGSDM, N-terminus). Functionally, precursor of a pore-forming protein involved in defense against bacteriophages. Cleavage of this precursor by its dedicated protease releases the active moiety (gasdermin bGSDM, N-terminus) which inserts into membranes, forming pores and triggering cell death. Expression of bGSDM and the neighboring protease gene (Ga0307981_100051430) is highly toxic in E.coli. Pore-forming protein that causes membrane permeabilization via a pyroptosis-like activity. This is the active form which makes ring-like pores with an interior pore diameter of 130-190 Angstroms, when integrated in liposomes. The sequence is that of Gasdermin bGSDM from Unknown prokaryotic organism.